The primary structure comprises 156 residues: Protein GLUTAMINE DUMPER 4 (156 aa).

Residues 1–39 are Extracellular-facing; sequence MRPLSIKPTSLDVARHATSVESFGNHRPPISPWHSPVPY. The helical transmembrane segment at 40–60 threads the bilayer; the sequence is LFGGLAAMLGLIAFALLILAC. Topologically, residues 61 to 156 are cytoplasmic; that stretch reads SYWRLSTSGD…AKENEETTSQ (96 aa). Residues 67-87 form a disordered region; sequence TSGDDSGERVDEEKESRSGVK. Over residues 72 to 84 the composition is skewed to basic and acidic residues; it reads SGERVDEEKESRS. The VIMAG signature appears at 99–103; sequence VIMAG. Residues 136–156 are disordered; the sequence is AGEEKMGDREKAKENEETTSQ.

It belongs to the GLUTAMINE DUMPER 1 (TC 9.B.60) family. In terms of tissue distribution, expressed in the vascular tissues, even in the minor veins of the leaves.

It localises to the membrane. Functionally, probable subunit of an amino acid transporter involved in the regulation of the amino acid metabolism. Stimulates amino acid export by activating nonselective amino acid facilitators. The polypeptide is Protein GLUTAMINE DUMPER 4 (GDU4) (Arabidopsis thaliana (Mouse-ear cress)).